Here is a 301-residue protein sequence, read N- to C-terminus: MFGWHWLLEWQTPYEFHGHLIEKVFAEEKTPYQHVTLVEFTRFGKGLIIDGKVQSTLYDEHIYHELLVHPLLLSLPKPPKNVLILGGGEGATLREVLKYKSVEKAVMVDIDEKVIEFAKKYLYEWHQGAFEDKRTSLIITDGLKFINETKDKYDAIILDLTDPIKDSTSYMLYTKEFYEKLRGILNQGGGIVTQATSPSFSLEVYVTIYNTIKEVFKEASASYTYMASFDGLWGFVYGGVRPDLLSEDEVNSRIRERISGQLRFYDDYSHKISFSLPKNIKSEFKKITKVSTEKDPIYVPA.

The region spanning 4-240 (WHWLLEWQTP…GLWGFVYGGV (237 aa)) is the PABS domain. Residue Q33 participates in S-methyl-5'-thioadenosine binding. H64 and E89 together coordinate spermidine. S-methyl-5'-thioadenosine contacts are provided by residues D109 and 141 to 142 (DG). The Proton acceptor role is filled by D159.

This sequence belongs to the spermidine/spermine synthase family. Homodimer or homotetramer.

The protein localises to the cytoplasm. It catalyses the reaction S-adenosyl 3-(methylsulfanyl)propylamine + putrescine = S-methyl-5'-thioadenosine + spermidine + H(+). The protein operates within amine and polyamine biosynthesis; spermidine biosynthesis; spermidine from putrescine: step 1/1. Catalyzes the irreversible transfer of a propylamine group from the amino donor S-adenosylmethioninamine (decarboxy-AdoMet) to putrescine (1,4-diaminobutane) to yield spermidine. The protein is Polyamine aminopropyltransferase of Saccharolobus islandicus (strain Y.N.15.51 / Yellowstone #2) (Sulfolobus islandicus).